The following is a 1214-amino-acid chain: Protein argonaute-2 (1214 aa).

A disordered region spans residues 1-412 (MGKKDKNKKG…GSIKRGTIGK (412 aa)). Low complexity-rich tracts occupy residues 18-93 (PQPQ…QQKS) and 107-117 (KQQVQGWTKQG). 7 stretches are compositionally biased toward gly residues: residues 118–131 (QQGG…GQDG), 141–154 (QQGG…GQEG), 164–177 (QQGG…GQEG), 187–200 (QQGG…GQEG), 210–223 (QQGG…GQEG), 233–246 (QQGG…GQEG), and 256–269 (QQGG…GQEG). Residues 270–282 (GYQQRPPGQQQGG) show a composition bias toward low complexity. Gly residues-rich tracts occupy residues 302–315 (QQGG…GQEG), 325–338 (QQGG…GQEG), and 348–361 (QQGG…GQEG). The span at 362 to 394 (GYQQRPPGQQPNQTQSQGQYQSRGPPQQQQAAP) shows a compositional bias: low complexity. Positions 608-717 (LERFSLKAKI…LPIELCSIEE (110 aa)) constitute a PAZ domain. The interaction with guide RNA stretch occupies residues 681–686 (YFHSRN). Residues 885–1186 (LAIVIIPQFR…ARGRVYLTGT (302 aa)) enclose the Piwi domain. 2 residues coordinate a divalent metal cation: Asp965 and Asp1037. 3 interaction with guide RNA regions span residues 1075 to 1076 (KR), 1119 to 1127 (HQAIQGTAK), and 1156 to 1178 (FPRC…VAAR). His1173 contacts a divalent metal cation.

It belongs to the argonaute family. Ago subfamily. As to quaternary structure, interacts with Fmr1, Dcr-1 and vig to form the RNA-induced silencing complex (RISC), a ribonucleoprotein (RNP) complex involved in translation regulation, other components of the complex are RpL5, RpL11 and Rm62. As part of the RISC complex, interacts with Tudor-SN. Interacts with Taf11. (Microbial infection) Interacts with cricket paralysis virus protein 1A; this interaction may block the RISC activity. Mg(2+) serves as cofactor. Mn(2+) is required as a cofactor.

It localises to the nucleus. The protein localises to the cytoplasm. The protein resides in the cytoplasmic ribonucleoprotein granule. Its function is as follows. Essential for RNA interference (RNAi); double-stranded RNA induces potent and specific gene silencing. RNAi is mediated by the RNA-induced silencing complex (RISC), a sequence-specific, multicomponent nuclease that destroys or silences messenger RNAs homologous to the silencing trigger. This chain is Protein argonaute-2, found in Drosophila melanogaster (Fruit fly).